A 750-amino-acid polypeptide reads, in one-letter code: Photosystem I P700 chlorophyll a apoprotein A1 (750 aa).

8 consecutive transmembrane segments (helical) span residues 72 to 95 (VFSAHFGQLAVIFIWLSGMYFHGA), 158 to 181 (LYTTAIGGLIAAGLMFFAGWFHYH), 197 to 221 (MNHHLAGLLGLGSLSWAGHQIHVSL), 293 to 311 (TVHHHVAIAVLFIVAGHMY), 348 to 371 (WHAQLGLNLALMGSLSIIVAHHMY), 387 to 413 (LSLFTHHMWIGGFCIVGGAAHAAIFMV), 435 to 457 (AIISHLNWVCIFLGFHSFGLYIH), and 532 to 550 (FLVHHIHAFTIHVTVLILL). [4Fe-4S] cluster is bound by residues Cys-574 and Cys-583. A run of 2 helical transmembrane segments spans residues 590–611 (HVFLGLFWMYNCLSIVIFHFSW) and 664–686 (LSAYGLMFLGAHFVWAFSLMFLF). His-675 serves as a coordination point for chlorophyll a'. 2 residues coordinate chlorophyll a: Met-683 and Tyr-691. Trp-692 contacts phylloquinone. A helical membrane pass occupies residues 724–744 (AVGVAHYLLGGIATTWAFFLA).

It belongs to the PsaA/PsaB family. As to quaternary structure, the PsaA/B heterodimer binds the P700 chlorophyll special pair and subsequent electron acceptors. PSI consists of a core antenna complex that captures photons, and an electron transfer chain that converts photonic excitation into a charge separation. The eukaryotic PSI reaction center is composed of at least 11 subunits. Requires P700 is a chlorophyll a/chlorophyll a' dimer, A0 is one or more chlorophyll a, A1 is one or both phylloquinones and FX is a shared 4Fe-4S iron-sulfur center. as cofactor.

It is found in the plastid. The protein resides in the chloroplast thylakoid membrane. The catalysed reaction is reduced [plastocyanin] + hnu + oxidized [2Fe-2S]-[ferredoxin] = oxidized [plastocyanin] + reduced [2Fe-2S]-[ferredoxin]. PsaA and PsaB bind P700, the primary electron donor of photosystem I (PSI), as well as the electron acceptors A0, A1 and FX. PSI is a plastocyanin-ferredoxin oxidoreductase, converting photonic excitation into a charge separation, which transfers an electron from the donor P700 chlorophyll pair to the spectroscopically characterized acceptors A0, A1, FX, FA and FB in turn. Oxidized P700 is reduced on the lumenal side of the thylakoid membrane by plastocyanin. The chain is Photosystem I P700 chlorophyll a apoprotein A1 from Mesostigma viride (Green alga).